Consider the following 560-residue polypeptide: Protein DETOXIFICATION 45, chloroplastic (560 aa).

Residues Met-1–Lys-75 constitute a chloroplast transit peptide. 12 helical membrane passes run Leu-109–Met-129, Val-147–Ala-167, Ala-209–Gly-229, Phe-250–Ile-270, Pro-280–Tyr-300, Gly-308–Leu-328, Phe-353–Ala-373, Val-389–Ser-411, Phe-426–Phe-446, Gly-466–Leu-486, Tyr-495–Pro-515, and Val-523–Met-543.

The protein belongs to the multi antimicrobial extrusion (MATE) (TC 2.A.66.1) family. As to expression, ubiquitous.

Its subcellular location is the plastid. The protein localises to the chloroplast membrane. The polypeptide is Protein DETOXIFICATION 45, chloroplastic (Arabidopsis thaliana (Mouse-ear cress)).